Reading from the N-terminus, the 630-residue chain is Pentatricopeptide repeat-containing protein At1g63130, mitochondrial (630 aa).

Residues 1–22 (MRRLFAISSTGNRFVHRSLLGK) constitute a mitochondrion transit peptide. PPR repeat units follow at residues 80–114 (SIVE…GISH), 115–149 (NLYT…GYEP), 150–184 (DIVT…GYQP), 185–219 (DSFT…GCQP), 220–254 (DLVT…KIEP), 255–289 (GVVI…GIRP), 290–324 (NVVT…KINP), 325–359 (NVVT…SIDP), 360–394 (DIFT…DCFP), 395–429 (NVVT…GLVG), 430–464 (NTVT…GVLP), 465–499 (DIMT…KMEP), 500–534 (DIYT…GVKP), 535–569 (NVVT…GPLP), and 570–604 (DSGT…RFVG).

The protein belongs to the PPR family. P subfamily.

It is found in the mitochondrion. In Arabidopsis thaliana (Mouse-ear cress), this protein is Pentatricopeptide repeat-containing protein At1g63130, mitochondrial.